The sequence spans 476 residues: Aspartyl/glutamyl-tRNA(Asn/Gln) amidotransferase subunit B (476 aa).

It belongs to the GatB/GatE family. GatB subfamily. Heterotrimer of A, B and C subunits.

It carries out the reaction L-glutamyl-tRNA(Gln) + L-glutamine + ATP + H2O = L-glutaminyl-tRNA(Gln) + L-glutamate + ADP + phosphate + H(+). It catalyses the reaction L-aspartyl-tRNA(Asn) + L-glutamine + ATP + H2O = L-asparaginyl-tRNA(Asn) + L-glutamate + ADP + phosphate + 2 H(+). Allows the formation of correctly charged Asn-tRNA(Asn) or Gln-tRNA(Gln) through the transamidation of misacylated Asp-tRNA(Asn) or Glu-tRNA(Gln) in organisms which lack either or both of asparaginyl-tRNA or glutaminyl-tRNA synthetases. The reaction takes place in the presence of glutamine and ATP through an activated phospho-Asp-tRNA(Asn) or phospho-Glu-tRNA(Gln). This is Aspartyl/glutamyl-tRNA(Asn/Gln) amidotransferase subunit B from Clostridium botulinum (strain ATCC 19397 / Type A).